A 237-amino-acid polypeptide reads, in one-letter code: Probable transcriptional regulatory protein PSHAa1370 (237 aa).

This sequence belongs to the TACO1 family.

It is found in the cytoplasm. The sequence is that of Probable transcriptional regulatory protein PSHAa1370 from Pseudoalteromonas translucida (strain TAC 125).